The following is a 228-amino-acid chain: 2-C-methyl-D-erythritol 4-phosphate cytidylyltransferase (228 aa).

The protein belongs to the IspD/TarI cytidylyltransferase family. IspD subfamily.

The catalysed reaction is 2-C-methyl-D-erythritol 4-phosphate + CTP + H(+) = 4-CDP-2-C-methyl-D-erythritol + diphosphate. It participates in isoprenoid biosynthesis; isopentenyl diphosphate biosynthesis via DXP pathway; isopentenyl diphosphate from 1-deoxy-D-xylulose 5-phosphate: step 2/6. Its function is as follows. Catalyzes the formation of 4-diphosphocytidyl-2-C-methyl-D-erythritol from CTP and 2-C-methyl-D-erythritol 4-phosphate (MEP). The sequence is that of 2-C-methyl-D-erythritol 4-phosphate cytidylyltransferase from Geobacillus thermodenitrificans (strain NG80-2).